A 611-amino-acid chain; its full sequence is Muscarinic acetylcholine receptor gar-3 (611 aa).

The Extracellular portion of the chain corresponds to 1–67 (MQSSSLGNAD…LLGEEGRMVM (67 aa)). 2 N-linked (GlcNAc...) asparagine glycosylation sites follow: N28 and N33. Residues 68-88 (IVVIGAMFALVTSLGNLMVMV) form a helical membrane-spanning segment. Residues 89–101 (SFKIDKQLQTISN) lie on the Cytoplasmic side of the membrane. The helical transmembrane segment at 102–122 (YFLFSLAVADIAIGVISIPMF) threads the bilayer. Residues 123–140 (TYYTAIQKWDLGYTMCQF) are Extracellular-facing. Cysteines 138 and 218 form a disulfide. The helical transmembrane segment at 141–161 (WLCIDYLMSNASVLNLLLISF) threads the bilayer. At 162-181 (DRYFSVTRPLSYRPRRTTKK) the chain is on the cytoplasmic side. A helical membrane pass occupies residues 182–202 (ALTMIACTYIISLILWPPWII). Over 203 to 227 (SWPYIEGKFTAEPGTCVVQFLQTNP) the chain is Extracellular. The helical transmembrane segment at 228-248 (YVTVGTAVAAFYLPVTIMCIL) threads the bilayer. Topologically, residues 249 to 525 (YTRVYWETQK…RKQESKAAKT (277 aa)) are cytoplasmic. 4 disordered regions span residues 299–364 (RRSM…SSEA), 377–432 (SHFA…NNNS), 446–477 (SRPS…NSEI), and 500–519 (FSSQ…RKQE). The span at 307-317 (SSTSIIKSSGS) shows a compositional bias: low complexity. Positions 503–519 (QERKSEKEQRKNERKQE) are enriched in basic and acidic residues. A helical membrane pass occupies residues 526 to 546 (LSAILCAFIATWTPYNLIVCW). The Extracellular portion of the chain corresponds to 547–557 (EAFFPNTVPNV). Residues 558 to 578 (LWTFSYFLCYINSTINPLCYA) traverse the membrane as a helical segment. Over 579-611 (LCNARFRHTYMRILRCKFKAERPTMNQGYVRRN) the chain is Cytoplasmic.

Belongs to the G-protein coupled receptor 1 family. Muscarinic acetylcholine receptor subfamily.

It is found in the cell membrane. The muscarinic acetylcholine receptor mediates various cellular responses, including inhibition of adenylate cyclase, breakdown of phosphoinositides and modulation of potassium channels through the action of G proteins. Primary transducing effect is Pi turnover. Enhances the release of the neurotransmitter acetlycholine in cholinergic motor neurons, which in turn positively feeds back to depolarize body wall muscles and allows for the maintenance of normal body posture and locomotion. The sequence is that of Muscarinic acetylcholine receptor gar-3 (gar-3) from Caenorhabditis elegans.